The chain runs to 95 residues: Large ribosomal subunit protein uL23 (95 aa).

This sequence belongs to the universal ribosomal protein uL23 family. In terms of assembly, part of the 50S ribosomal subunit. Contacts protein L29, and trigger factor when it is bound to the ribosome.

Functionally, one of the early assembly proteins it binds 23S rRNA. One of the proteins that surrounds the polypeptide exit tunnel on the outside of the ribosome. Forms the main docking site for trigger factor binding to the ribosome. In Rubrobacter xylanophilus (strain DSM 9941 / JCM 11954 / NBRC 16129 / PRD-1), this protein is Large ribosomal subunit protein uL23.